The primary structure comprises 354 residues: Aspartate carbamoyltransferase catalytic subunit (354 aa).

Carbamoyl phosphate contacts are provided by Arg67 and Thr68. Lys95 is an L-aspartate binding site. Residues Arg117, His150, and Gln153 each contribute to the carbamoyl phosphate site. The L-aspartate site is built by Arg190 and Arg261. The carbamoyl phosphate site is built by Gly302 and Pro303.

It belongs to the aspartate/ornithine carbamoyltransferase superfamily. ATCase family. In terms of assembly, heterododecamer (2C3:3R2) of six catalytic PyrB chains organized as two trimers (C3), and six regulatory PyrI chains organized as three dimers (R2).

The enzyme catalyses carbamoyl phosphate + L-aspartate = N-carbamoyl-L-aspartate + phosphate + H(+). It functions in the pathway pyrimidine metabolism; UMP biosynthesis via de novo pathway; (S)-dihydroorotate from bicarbonate: step 2/3. In terms of biological role, catalyzes the condensation of carbamoyl phosphate and aspartate to form carbamoyl aspartate and inorganic phosphate, the committed step in the de novo pyrimidine nucleotide biosynthesis pathway. In Synechococcus sp. (strain RCC307), this protein is Aspartate carbamoyltransferase catalytic subunit.